The chain runs to 202 residues: dITP/XTP pyrophosphatase (202 aa).

Position 7–12 (7–12) interacts with substrate; that stretch reads SRNEAK. The active-site Proton acceptor is the aspartate 68. A Mg(2+)-binding site is contributed by aspartate 68. Residues serine 69, 156 to 159, lysine 179, and 184 to 185 contribute to the substrate site; these read FGYD and HR.

The protein belongs to the HAM1 NTPase family. In terms of assembly, homodimer. It depends on Mg(2+) as a cofactor.

It catalyses the reaction XTP + H2O = XMP + diphosphate + H(+). The catalysed reaction is dITP + H2O = dIMP + diphosphate + H(+). It carries out the reaction ITP + H2O = IMP + diphosphate + H(+). Pyrophosphatase that catalyzes the hydrolysis of nucleoside triphosphates to their monophosphate derivatives, with a high preference for the non-canonical purine nucleotides XTP (xanthosine triphosphate), dITP (deoxyinosine triphosphate) and ITP. Seems to function as a house-cleaning enzyme that removes non-canonical purine nucleotides from the nucleotide pool, thus preventing their incorporation into DNA/RNA and avoiding chromosomal lesions. The sequence is that of dITP/XTP pyrophosphatase from Frankia alni (strain DSM 45986 / CECT 9034 / ACN14a).